A 76-amino-acid polypeptide reads, in one-letter code: Lividin-2 (76 aa).

The signal sequence occupies residues 1–22 (MFTLKKSLLLLFFLGTISLSLC). The propeptide occupies 23 to 41 (QEERNADEEDGGEVTEEEV). Cys-70 and Cys-76 form a disulfide bridge.

Expressed by the skin glands.

It is found in the secreted. In terms of biological role, antimicrobial peptide. This Odorrana livida (Green mountain frog) protein is Lividin-2.